We begin with the raw amino-acid sequence, 545 residues long: Phospholipase B-like 1 (545 aa).

Positions 1-35 (MSRHSQDERLGLPQPPALLPLLLLLLAVAVPLSQA) are cleaved as a signal peptide. Asn-68 carries N-linked (GlcNAc...) (high mannose) asparagine; alternate glycosylation. The N-linked (GlcNAc...) (hybrid) asparagine; alternate glycan is linked to Asn-68. The propeptide at 206-224 (LSPTKNSSLKFFKRWDMGH) is removed in mature form. Residues Asn-305, Asn-363, and Asn-408 are each glycosylated (N-linked (GlcNAc...) (high mannose) asparagine; alternate). N-linked (GlcNAc...) (hybrid) asparagine; alternate glycosylation is found at Asn-305, Asn-363, and Asn-408. 2 disulfides stabilise this stretch: Cys-467/Cys-472 and Cys-471/Cys-486. A glycan (N-linked (GlcNAc...) (high mannose) asparagine; alternate) is linked at Asn-523. The N-linked (GlcNAc...) (hybrid) asparagine; alternate glycan is linked to Asn-523.

Belongs to the phospholipase B-like family. May form a homodimer, each monomer is composed of a chain A and a chain B. In terms of processing, the maturation cleavages that produces chains A and B are required to open the putative substrate binding pocket. Both chains A and B remain associated in the mature protein.

The protein localises to the lysosome. Its function is as follows. Exhibits a weak phospholipase activity, acting on various phospholipids, including phosphatidylcholine, phosphatidylinositol, phosphatidylethanolamine and lysophospholipids. However, in view of the small size of the putative binding pocket, it has been proposed that it may act rather as an amidase or a peptidase. The sequence is that of Phospholipase B-like 1 (PLBD1) from Bos taurus (Bovine).